Consider the following 887-residue polypeptide: Phosphatidylinositol 3-kinase catalytic subunit type 3 (887 aa).

A C2 PI3K-type domain is found at 35–184 (YKAVLEDPML…LAKLTKAHRQ (150 aa)). The interval 149-170 (VEADGSEPTKTPGRTSSTLSED) is disordered. Polar residues predominate over residues 156–170 (PTKTPGRTSSTLSED). Phosphothreonine; by AMPK is present on T163. Residue S165 is modified to Phosphoserine; by AMPK. S244, S261, and S282 each carry phosphoserine. The 238-residue stretch at 283 to 520 (DHDLKPNAAT…PKTHEMYLNV (238 aa)) folds into the PIK helical domain. Residues 447-467 (TSPLPSVSSPPPASKTKEVPD) are disordered. Residues 605-871 (IPETATLFKS…LIDESVHALF (267 aa)) enclose the PI3K/PI4K catalytic domain. A G-loop region spans residues 611–617 (LFKSALM). The tract at residues 740–748 (GVGDRHLDN) is catalytic loop. Residues 759 to 780 (HIDFGYILGRDPKPLPPPMKLN) form an activation loop region.

It belongs to the PI3/PI4-kinase family. In terms of assembly, component of the PI3K (PI3KC3/PI3K-III/class III phosphatidylinositol 3-kinase) complex the core of which is composed of the catalytic subunit PIK3C3, the regulatory subunit PIK3R4 and BECN1 associating with additional regulatory/auxiliary subunits to form alternative complex forms. Alternative complex forms containing a fourth regulatory subunit in a mutually exclusive manner are: the PI3K complex I (PI3KC3-C1) containing ATG14, and the PI3K complex II (PI3KC3-C2) containing UVRAG. PI3KC3-C1 displays a V-shaped architecture with PIK3R4 serving as a bridge between PIK3C3 and the ATG14:BECN1 subcomplex. Both, PI3KC3-C1 and PI3KC3-C2, can associate with further regulatory subunits such as RUBCN, SH3GLB1/Bif-1 and AMBRA1. PI3KC3-C1 probably associates with PIK3CB. Interacts with RAB7A in the presence of PIK3R4. Interacts with AMBRA1. Interacts with BECN1P1/BECN2. Interacts with SLAMF1. May be a component of a complex composed of RAB5A (in GDP-bound form), DYN2 and PIK3C3. Interacts with NCKAP1L. Interacts with ATG14; this interaction is increased in the absence of TMEM39A. Interacts with STEEP1; the interaction is STING1-dependent and required for trafficking of STING1 from the endoplasmic reticulum. Interacts with YWHAG. Interacts with ARMC3. Requires Mn(2+) as cofactor. Post-translationally, ubiquitinated via 'Lys-29'- and 'Lys-48'-linked ubiquitination by UBE3C, promoting its degradation. Deubiquitination by ZRANB1/TRABID promotes its stabilization, leading to autophagosome maturation. As to expression, ubiquitously expressed, with a highest expression in skeletal muscle.

The protein localises to the midbody. It is found in the late endosome. The protein resides in the cytoplasmic vesicle. Its subcellular location is the autophagosome. The enzyme catalyses a 1,2-diacyl-sn-glycero-3-phospho-(1D-myo-inositol) + ATP = a 1,2-diacyl-sn-glycero-3-phospho-(1D-myo-inositol-3-phosphate) + ADP + H(+). Its function is as follows. Catalytic subunit of the PI3K complex that mediates formation of phosphatidylinositol 3-phosphate; different complex forms are believed to play a role in multiple membrane trafficking pathways: PI3KC3-C1 is involved in initiation of autophagosomes and PI3KC3-C2 in maturation of autophagosomes and endocytosis. As part of PI3KC3-C1, promotes endoplasmic reticulum membrane curvature formation prior to vesicle budding. Involved in regulation of degradative endocytic trafficking and required for the abscission step in cytokinesis, probably in the context of PI3KC3-C2. Involved in the transport of lysosomal enzyme precursors to lysosomes. Required for transport from early to late endosomes. (Microbial infection) Kinase activity is required for SARS coronavirus-2/SARS-CoV-2 replication. The protein is Phosphatidylinositol 3-kinase catalytic subunit type 3 of Homo sapiens (Human).